Consider the following 396-residue polypeptide: Putative transposase y4rJ (396 aa).

The protein belongs to the transposase 20 family.

This chain is Putative transposase y4rJ, found in Sinorhizobium fredii (strain NBRC 101917 / NGR234).